Here is a 696-residue protein sequence, read N- to C-terminus: TBC1 domain family member 12 (696 aa).

At methionine 1 the chain carries N-acetylmethionine. Disordered regions lie at residues 1–59 (MMGP…PPPR), 91–121 (PAAR…RRRR), and 156–234 (CCLA…ARAR). Over residues 46-55 (PPEEAGEEEA) the composition is skewed to acidic residues. A compositionally biased stretch (basic and acidic residues) spans 108 to 118 (RQDRRGPEEAR). Serine 205 carries the post-translational modification Phosphoserine. The span at 209-222 (LLPSAGPSAPLPAA) shows a compositional bias: low complexity. At serine 236 the chain carries Phosphoserine. Residues 330–373 (KSVEEALRHRQEYDEMVAEAKKREIKEAHKRKRIMKERFKQEES) are a coiled coil. One can recognise a Rab-GAP TBC domain in the interval 405–613 (GLPPSVRGKV…RVWDVFCRDG (209 aa)). Phosphoserine is present on serine 668. Threonine 669 carries the post-translational modification Phosphothreonine.

Interacts with RAB11A; this interaction recruits TBC1D12 to RAB11A-positive recycling endosomes.

It localises to the endosome. RAB11A-binding protein that plays a role in neurite outgrowth. This is TBC1 domain family member 12 (Tbc1d12) from Mus musculus (Mouse).